The sequence spans 113 residues: Large ribosomal subunit protein bL19 (113 aa).

The protein belongs to the bacterial ribosomal protein bL19 family.

This protein is located at the 30S-50S ribosomal subunit interface and may play a role in the structure and function of the aminoacyl-tRNA binding site. This is Large ribosomal subunit protein bL19 from Mycobacterium sp. (strain JLS).